The sequence spans 185 residues: Elongation factor P (185 aa).

This sequence belongs to the elongation factor P family.

Its subcellular location is the cytoplasm. The protein operates within protein biosynthesis; polypeptide chain elongation. Its function is as follows. Involved in peptide bond synthesis. Stimulates efficient translation and peptide-bond synthesis on native or reconstituted 70S ribosomes in vitro. Probably functions indirectly by altering the affinity of the ribosome for aminoacyl-tRNA, thus increasing their reactivity as acceptors for peptidyl transferase. This is Elongation factor P from Mesomycoplasma hyopneumoniae (strain 7448) (Mycoplasma hyopneumoniae).